The chain runs to 648 residues: Biosynthetic arginine decarboxylase (648 aa).

Lysine 109 is subject to N6-(pyridoxal phosphate)lysine. 291-301 (LDVGGGLGVDY) contacts substrate.

Belongs to the Orn/Lys/Arg decarboxylase class-II family. SpeA subfamily. Mg(2+) serves as cofactor. Pyridoxal 5'-phosphate is required as a cofactor.

The catalysed reaction is L-arginine + H(+) = agmatine + CO2. Its pathway is amine and polyamine biosynthesis; agmatine biosynthesis; agmatine from L-arginine: step 1/1. In terms of biological role, catalyzes the biosynthesis of agmatine from arginine. The polypeptide is Biosynthetic arginine decarboxylase (Prochlorococcus marinus (strain MIT 9303)).